Here is a 100-residue protein sequence, read N- to C-terminus: MHLSPQEKDKLLIFSAALLAERRLDRGLKLNYPETIAFLSFQVLEGARDGKSVSQLMSEGTTWLTKSQVMEGIPEMVDEVQIEAVFPDGTKLVTIHNPIN.

This sequence belongs to the urease gamma subunit family. In terms of assembly, heterotrimer of UreA (gamma), UreB (beta) and UreC (alpha) subunits. Three heterotrimers associate to form the active enzyme.

The protein resides in the cytoplasm. It catalyses the reaction urea + 2 H2O + H(+) = hydrogencarbonate + 2 NH4(+). The protein operates within nitrogen metabolism; urea degradation; CO(2) and NH(3) from urea (urease route): step 1/1. This Prochlorococcus marinus (strain MIT 9215) protein is Urease subunit gamma.